The sequence spans 635 residues: Threonine--tRNA ligase (635 aa).

One can recognise a TGS domain in the interval 1-62 (MITITLPDGS…EHDAILRIIT (62 aa)). Residues 244 to 535 (DHRKIGKAQD…LIEHYAGIWP (292 aa)) are catalytic. Zn(2+) is bound by residues Cys335, His386, and His512.

Belongs to the class-II aminoacyl-tRNA synthetase family. As to quaternary structure, homodimer. Requires Zn(2+) as cofactor.

It localises to the cytoplasm. It catalyses the reaction tRNA(Thr) + L-threonine + ATP = L-threonyl-tRNA(Thr) + AMP + diphosphate + H(+). In terms of biological role, catalyzes the attachment of threonine to tRNA(Thr) in a two-step reaction: L-threonine is first activated by ATP to form Thr-AMP and then transferred to the acceptor end of tRNA(Thr). Also edits incorrectly charged L-seryl-tRNA(Thr). This chain is Threonine--tRNA ligase, found in Xylella fastidiosa (strain M12).